A 547-amino-acid chain; its full sequence is T-complex protein 1 subunit alpha (547 aa).

The protein belongs to the TCP-1 chaperonin family. As to quaternary structure, heterooligomeric complex of about 850 to 900 kDa that forms two stacked rings, 12 to 16 nm in diameter.

Its subcellular location is the cytoplasm. Molecular chaperone; assists the folding of proteins upon ATP hydrolysis. Known to play a role, in vitro, in the folding of actin and tubulin. In Tetrahymena pyriformis, this protein is T-complex protein 1 subunit alpha.